A 232-amino-acid chain; its full sequence is MPDTTGGHPAALKVVTLDGPAGVGKTTLARRVADALGIPYLDTGAMFRTMAWRLGPDGPDLDEALLRDRLAGFIFTLRGRGGASVLSCNGEDIGNEIRTEDVGAMASRIAALPVVRECLKAAQQRMGAAQPLVVEGRDMGTVVFPGARHKFFLDAAPEIRAMRRYTQLQTMGEAHDLALLTEQIRSRDEQDRNRAVAPLRPAADAIIVDTGDLDIDGVFGVIMQHIRSRDGL.

19–27 (GPAGVGKTT) contributes to the ATP binding site.

This sequence belongs to the cytidylate kinase family. Type 1 subfamily.

It is found in the cytoplasm. It catalyses the reaction CMP + ATP = CDP + ADP. The enzyme catalyses dCMP + ATP = dCDP + ADP. The polypeptide is Cytidylate kinase (Nitratidesulfovibrio vulgaris (strain DP4) (Desulfovibrio vulgaris)).